Here is a 591-residue protein sequence, read N- to C-terminus: DEAD-box ATP-dependent RNA helicase 17 (591 aa).

The short motif at 23-52 is the Q motif element; it reads CSFTDLGLHPTLCAHLQDKMGFQAPTRIQA. Residues 55–248 enclose the Helicase ATP-binding domain; that stretch reads IPVAMSGQHM…KISLKNPVMI (194 aa). 68 to 75 contacts ATP; it reads AATGTGKT. Positions 181–184 match the DEAD box motif; that stretch reads DEAD. The region spanning 293–482 is the Helicase C-terminal domain; sequence QLVQRYVKVS…SFPVNGQRLH (190 aa). Residues 562–591 form a disordered region; the sequence is GRSHQVQLKKRKKEQKRERPAKRRKIPAKR. Over residues 568–591 the composition is skewed to basic residues; it reads QLKKRKKEQKRERPAKRRKIPAKR.

It belongs to the DEAD box helicase family. DDX31/DBP7 subfamily. In terms of tissue distribution, expressed in flowers and pollen grains.

The protein resides in the nucleus. It catalyses the reaction ATP + H2O = ADP + phosphate + H(+). In terms of biological role, may play a role in organellar ribosome biogenesis and suppress 16S rRNA maturation. This chain is DEAD-box ATP-dependent RNA helicase 17, found in Oryza sativa subsp. japonica (Rice).